A 635-amino-acid polypeptide reads, in one-letter code: Multiple inositol polyphosphate phosphatase 1 (635 aa).

A signal peptide spans 1-23; it reads MMVKIKNIIILFCIFGLLSNVSS. At 24–565 the chain is on the extracellular side; sequence LSSSSSSSQS…GNDSHSKKSS (542 aa). Positions 66–102 are disordered; the sequence is KNGDSNSQGDGSSGNSNSNSNSNSNSNSNSDSSNEPP. Over residues 67–99 the composition is skewed to low complexity; it reads NGDSNSQGDGSSGNSNSNSNSNSNSNSNSDSSN. His116 is a catalytic residue. The span at 380 to 421 shows a compositional bias: low complexity; it reads SSSSSSSSSSNNGDNSGSNGSSGSGSSTSTSSNDNGSTNNND. A disordered region spans residues 380–425; it reads SSSSSSSSSSNNGDNSGSNGSSGSGSSTSTSSNDNGSTNNNDNKVE. Residues 566-586 form a helical membrane-spanning segment; the sequence is YFLAIFIPITFLVGGTIGGIF. Over 587-635 the chain is Cytoplasmic; the sequence is TYFSYEKIMQVKNRKKLTQYGNDEFISSPKSKSFSFKPTKFDSRSPLIQ. A compositionally biased stretch (low complexity) spans 614 to 624; sequence SPKSKSFSFKP. The disordered stretch occupies residues 614–635; that stretch reads SPKSKSFSFKPTKFDSRSPLIQ.

This sequence belongs to the histidine acid phosphatase family. MINPP1 subfamily.

The protein resides in the membrane. The catalysed reaction is 1D-myo-inositol hexakisphosphate + H2O = 1D-myo-inositol 1,2,4,5,6-pentakisphosphate + phosphate. It carries out the reaction 1D-myo-inositol 1,2,4,5,6-pentakisphosphate + H2O = 1D-myo-inositol 1,2,5,6-tetrakisphosphate + phosphate. The enzyme catalyses 1D-myo-inositol 1,2,5,6-tetrakisphosphate + H2O = 1D-myo-inositol 1,2,6-trisphosphate + phosphate. It catalyses the reaction 1D-myo-inositol 1,2,6-trisphosphate + H2O = 1D-myo-inositol 1,2-bisphosphate + phosphate. The catalysed reaction is 1D-myo-inositol 1,2-bisphosphate + H2O = 1D-myo-inositol 2-phosphate + phosphate. It carries out the reaction (2R)-2,3-bisphosphoglycerate + H2O = (2R)-2-phosphoglycerate + phosphate. In terms of biological role, probable multiple inositol polyphosphate phosphatase that hydrolyzes 1D-myo-inositol 1,3,4,5,6-pentakisphosphate (InsP5[2OH]) and 1D-myo-inositol hexakisphosphate (InsP6) to a range of less phosphorylated inositol phosphates. This regulates the availability of these various small molecule second messengers and metal chelators which control many aspects of cell physiology. May have a dual substrate specificity, and function as a 2,3-bisphosphoglycerate 3-phosphatase hydrolyzing 2,3-bisphosphoglycerate to 2-phosphoglycerate. 2,3-bisphosphoglycerate (BPG) is formed as part of the Rapoport-Luebering glycolytic bypass. This is Multiple inositol polyphosphate phosphatase 1 (mipp1) from Dictyostelium discoideum (Social amoeba).